We begin with the raw amino-acid sequence, 484 residues long: ATP synthase subunit beta (484 aa).

162–169 contacts ATP; sequence GGAGVGKT.

The protein belongs to the ATPase alpha/beta chains family. F-type ATPases have 2 components, CF(1) - the catalytic core - and CF(0) - the membrane proton channel. CF(1) has five subunits: alpha(3), beta(3), gamma(1), delta(1), epsilon(1). CF(0) has four main subunits: a(1), b(1), b'(1) and c(9-12).

Its subcellular location is the cellular thylakoid membrane. It carries out the reaction ATP + H2O + 4 H(+)(in) = ADP + phosphate + 5 H(+)(out). Its function is as follows. Produces ATP from ADP in the presence of a proton gradient across the membrane. The catalytic sites are hosted primarily by the beta subunits. This is ATP synthase subunit beta from Trichodesmium erythraeum (strain IMS101).